Consider the following 103-residue polypeptide: Co-chaperonin GroES (103 aa).

This sequence belongs to the GroES chaperonin family. Heptamer of 7 subunits arranged in a ring. Interacts with the chaperonin GroEL.

Its subcellular location is the cytoplasm. Its function is as follows. Together with the chaperonin GroEL, plays an essential role in assisting protein folding. The GroEL-GroES system forms a nano-cage that allows encapsulation of the non-native substrate proteins and provides a physical environment optimized to promote and accelerate protein folding. GroES binds to the apical surface of the GroEL ring, thereby capping the opening of the GroEL channel. This Prochlorococcus marinus (strain MIT 9211) protein is Co-chaperonin GroES.